A 102-amino-acid chain; its full sequence is Small ribosomal subunit protein uS10 (102 aa).

Belongs to the universal ribosomal protein uS10 family. Part of the 30S ribosomal subunit.

Involved in the binding of tRNA to the ribosomes. In Micrococcus luteus (strain ATCC 4698 / DSM 20030 / JCM 1464 / CCM 169 / CCUG 5858 / IAM 1056 / NBRC 3333 / NCIMB 9278 / NCTC 2665 / VKM Ac-2230) (Micrococcus lysodeikticus), this protein is Small ribosomal subunit protein uS10.